The sequence spans 464 residues: ATP synthase subunit beta (464 aa).

Position 152-159 (152-159 (GGAGVGKT)) interacts with ATP.

This sequence belongs to the ATPase alpha/beta chains family. As to quaternary structure, F-type ATPases have 2 components, CF(1) - the catalytic core - and CF(0) - the membrane proton channel. CF(1) has five subunits: alpha(3), beta(3), gamma(1), delta(1), epsilon(1). CF(0) has three main subunits: a(1), b(2) and c(9-12). The alpha and beta chains form an alternating ring which encloses part of the gamma chain. CF(1) is attached to CF(0) by a central stalk formed by the gamma and epsilon chains, while a peripheral stalk is formed by the delta and b chains.

The protein resides in the cell membrane. It carries out the reaction ATP + H2O + 4 H(+)(in) = ADP + phosphate + 5 H(+)(out). Produces ATP from ADP in the presence of a proton gradient across the membrane. The catalytic sites are hosted primarily by the beta subunits. The sequence is that of ATP synthase subunit beta from Ureaplasma urealyticum serovar 10 (strain ATCC 33699 / Western).